Here is an 824-residue protein sequence, read N- to C-terminus: Glycerol-3-phosphate acyltransferase (824 aa).

An HXXXXD motif motif is present at residues C302–M307.

The protein belongs to the GPAT/DAPAT family.

It localises to the cell inner membrane. The catalysed reaction is sn-glycerol 3-phosphate + an acyl-CoA = a 1-acyl-sn-glycero-3-phosphate + CoA. The protein operates within phospholipid metabolism; CDP-diacylglycerol biosynthesis; CDP-diacylglycerol from sn-glycerol 3-phosphate: step 1/3. In Actinobacillus pleuropneumoniae serotype 3 (strain JL03), this protein is Glycerol-3-phosphate acyltransferase.